Here is a 485-residue protein sequence, read N- to C-terminus: Glutamate--tRNA ligase (485 aa).

A 'HIGH' region motif is present at residues 11-21 (PSPTGHLHIGN). The short motif at 252–256 (KLSKR) is the 'KMSKS' region element. ATP is bound at residue K255.

Belongs to the class-I aminoacyl-tRNA synthetase family. Glutamate--tRNA ligase type 1 subfamily. In terms of assembly, monomer.

Its subcellular location is the cytoplasm. It carries out the reaction tRNA(Glu) + L-glutamate + ATP = L-glutamyl-tRNA(Glu) + AMP + diphosphate. In terms of biological role, catalyzes the attachment of glutamate to tRNA(Glu) in a two-step reaction: glutamate is first activated by ATP to form Glu-AMP and then transferred to the acceptor end of tRNA(Glu). In Bacillus cereus (strain ATCC 10987 / NRS 248), this protein is Glutamate--tRNA ligase.